A 323-amino-acid polypeptide reads, in one-letter code: uncharacterized protein (323 aa).

This is an uncharacterized protein from Bacillus subtilis (strain 168).